An 882-amino-acid chain; its full sequence is MTNERYNARESEPRWQRQWDDNAIFATQNDDPRPKYYVLEMFPYPSGRIHMGHVRNYTMGDVVARTMRARGYNVLHPMGWDAFGMPAENAAMANKVHPKSWTYANIATMKAQLKSMGLSLDWSREFATCDPSYYKHQQRMFIDFLAAGLVERKQSKVNWDPVDNTVLANEQVIDGRGWRSGALVEQRELTQWFFKISKYSEDLLTALDRLDRWPDKVRIMQRNWIGRSEGLLLRFALDTSTTPNHETEVEVFTTRPDTLFGAKFVALSPDHPLAAEAAKSNPALAAFIEECRKTGTAQAEIDTAEKQGFDTGIRAVHPFDPSWQLPVYVANFVLMDYGTGAIFGCPAHDQRDLDFVNKYGLGNLPVVCPEGQDPATFVVTDIAYDGDGRLINSNNGFIALDGMSIADAKEAVAKRLEAIALGNRPVAQRQVNFRLRDWGISRQRYWGCPIPIIHCEVCGVVPVPIKDLPVKLPDDIEFDRPGNPLDRHPTWKHVACPQCGGKARRETDTMDTFVDSSWYFSRFTDPWNEDAPTTRAVVDRMMPVDQYIGGVEHAILHLLYSRFFTRAMQATGHVGFDEPFRGMFTQGMVVHETYRKLDGTFASPAEIRIVADGDNRLASLLDSGQPVEIGPIEKMSKSKRNTVDPDDIIGSYGADTARWFMLSDSPPDRDVIWSEDGVKGASRFVQRVWRLVSAMAPQLPAPGTRLDAANHPAAQALRVAAHRTLSEILAGIDRLRFNTAVAKLYVYVGELEAVLANAPQGGLGGDPVLAAAAREAIDILVLLIAPMMPHLAEECWAAIGHSGLVSEARWPEIETALLVSDSITLPVQVNGKKRGEVTVARDAQNPQIEAAVLALDAVKQALDGKPVRKIIIVPQRIVNVVG.

The short motif at 43-53 (PYPSGRIHMGH) is the 'HIGH' region element. Residues 634 to 638 (KMSKS) carry the 'KMSKS' region motif. K637 provides a ligand contact to ATP.

The protein belongs to the class-I aminoacyl-tRNA synthetase family.

It is found in the cytoplasm. The catalysed reaction is tRNA(Leu) + L-leucine + ATP = L-leucyl-tRNA(Leu) + AMP + diphosphate. In Rhodopseudomonas palustris (strain BisB18), this protein is Leucine--tRNA ligase.